A 214-amino-acid chain; its full sequence is Phosphatidylcholine transfer protein (214 aa).

Methionine 1 is subject to N-acetylmethionine. The region spanning 1–212 (MAGPAAHFSD…MVKACQNYHK (212 aa)) is the START domain. Positions 72 and 78 each coordinate a 1,2-diacyl-sn-glycero-3-phosphocholine. Serine 139 is modified (phosphoserine). Glutamine 157 serves as a coordination point for a 1,2-diacyl-sn-glycero-3-phosphocholine.

Interacts with ACOT13/THEM2.

Its subcellular location is the cytoplasm. Its function is as follows. Lipid transfer protein that promotes intermembrane transfer of phosphatidylcholines but no other phospholipids. Binds a single lipid molecule. May play a role in hepatocellular selection and transport of phosphatidylcholines during bile formation. In Rattus norvegicus (Rat), this protein is Phosphatidylcholine transfer protein (Pctp).